Here is a 304-residue protein sequence, read N- to C-terminus: Ring-infected erythrocyte surface antigen (304 aa).

Residues Asn-18 and Asn-22 are each glycosylated (N-linked (GlcNAc...) asparagine). Residues 142-159 (EHDAEENVEHDAEENVEH) show a composition bias toward basic and acidic residues. The interval 142–304 (EHDAEENVEH…EENVEEHNGI (163 aa)) is disordered. Residues 160–298 (DAEENAEENV…NVEEYDEENV (139 aa)) are compositionally biased toward acidic residues.

The protein resides in the cell membrane. May disrupt the normal intermolecular interactions of the cytoplasmic domain of band 3 and thereby facilitate the invagination of the red cell membrane which is necessary for the formation of the parasitophorous vacuole. The polypeptide is Ring-infected erythrocyte surface antigen (RESA) (Plasmodium falciparum (isolate Palo Alto / Uganda)).